Consider the following 142-residue polypeptide: MKTPRRRMRLAVFKALFQHEFRRDEDLEQILEEILDETYDKKAKEDARRYIRGIKENLPMIDNLISRYLEKWSLNRLSAVDRNVLRLATYELLFEKDIPIEATIDEAIEIAKRYGTENSGKFVNGILDRIAKEHAPKEKFEL.

It belongs to the NusB family.

In terms of biological role, involved in transcription antitermination. Required for transcription of ribosomal RNA (rRNA) genes. Binds specifically to the boxA antiterminator sequence of the ribosomal RNA (rrn) operons. The sequence is that of Transcription antitermination protein NusB from Thermotoga petrophila (strain ATCC BAA-488 / DSM 13995 / JCM 10881 / RKU-1).